The following is a 67-amino-acid chain: uncharacterized protein (67 aa).

The signal sequence occupies residues 1–28 (MSHVSVIAARLLVWVGILLCLGVPQLWA). N-linked (GlcNAc...) asparagine; by host glycosylation is present at asparagine 39.

This is an uncharacterized protein from Invertebrate iridescent virus 3 (IIV-3).